We begin with the raw amino-acid sequence, 390 residues long: Succinate--CoA ligase [ADP-forming] subunit beta (390 aa).

The region spanning 9–244 (KEILKRYGVN…ETQTDTSENE (236 aa)) is the ATP-grasp domain. ATP-binding positions include lysine 46, 53-55 (GRG), glutamate 99, leucine 102, and glutamate 107. Mg(2+) is bound by residues asparagine 199 and aspartate 213. Residues asparagine 264 and 321–323 (GIV) contribute to the substrate site.

This sequence belongs to the succinate/malate CoA ligase beta subunit family. As to quaternary structure, heterotetramer of two alpha and two beta subunits. Requires Mg(2+) as cofactor.

The enzyme catalyses succinate + ATP + CoA = succinyl-CoA + ADP + phosphate. The catalysed reaction is GTP + succinate + CoA = succinyl-CoA + GDP + phosphate. It participates in carbohydrate metabolism; tricarboxylic acid cycle; succinate from succinyl-CoA (ligase route): step 1/1. Its function is as follows. Succinyl-CoA synthetase functions in the citric acid cycle (TCA), coupling the hydrolysis of succinyl-CoA to the synthesis of either ATP or GTP and thus represents the only step of substrate-level phosphorylation in the TCA. The beta subunit provides nucleotide specificity of the enzyme and binds the substrate succinate, while the binding sites for coenzyme A and phosphate are found in the alpha subunit. This Campylobacter curvus (strain 525.92) protein is Succinate--CoA ligase [ADP-forming] subunit beta.